The sequence spans 457 residues: Serine--tRNA ligase (457 aa).

L-serine is bound at residue 252-254 (TAE). Residues 283–285 (RKE) and valine 299 each bind ATP. Position 306 (glutamate 306) interacts with L-serine. 370–373 (EVVS) provides a ligand contact to ATP. Position 406 (threonine 406) interacts with L-serine.

This sequence belongs to the class-II aminoacyl-tRNA synthetase family. Type-1 seryl-tRNA synthetase subfamily. In terms of assembly, homodimer. The tRNA molecule binds across the dimer.

The protein resides in the cytoplasm. The catalysed reaction is tRNA(Ser) + L-serine + ATP = L-seryl-tRNA(Ser) + AMP + diphosphate + H(+). It catalyses the reaction tRNA(Sec) + L-serine + ATP = L-seryl-tRNA(Sec) + AMP + diphosphate + H(+). It functions in the pathway aminoacyl-tRNA biosynthesis; selenocysteinyl-tRNA(Sec) biosynthesis; L-seryl-tRNA(Sec) from L-serine and tRNA(Sec): step 1/1. Catalyzes the attachment of serine to tRNA(Ser). Is also able to aminoacylate tRNA(Sec) with serine, to form the misacylated tRNA L-seryl-tRNA(Sec), which will be further converted into selenocysteinyl-tRNA(Sec). This chain is Serine--tRNA ligase, found in Thermococcus onnurineus (strain NA1).